The primary structure comprises 565 residues: NAD-dependent malic enzyme (565 aa).

Tyr-104 acts as the Proton donor in catalysis. Residue Arg-157 participates in NAD(+) binding. The active-site Proton acceptor is Lys-175. Glu-246, Asp-247, and Asp-270 together coordinate a divalent metal cation. Residues Asp-270 and Asn-418 each coordinate NAD(+).

The protein belongs to the malic enzymes family. As to quaternary structure, homotetramer. Mg(2+) is required as a cofactor. The cofactor is Mn(2+).

It catalyses the reaction (S)-malate + NAD(+) = pyruvate + CO2 + NADH. The enzyme catalyses oxaloacetate + H(+) = pyruvate + CO2. The protein is NAD-dependent malic enzyme of Proteus mirabilis (strain HI4320).